The chain runs to 189 residues: Peptidyl-tRNA hydrolase (189 aa).

TRNA is bound at residue tyrosine 15. Residue histidine 20 is the Proton acceptor of the active site. TRNA contacts are provided by phenylalanine 66, asparagine 68, and asparagine 114.

Belongs to the PTH family. Monomer.

The protein resides in the cytoplasm. It carries out the reaction an N-acyl-L-alpha-aminoacyl-tRNA + H2O = an N-acyl-L-amino acid + a tRNA + H(+). Hydrolyzes ribosome-free peptidyl-tRNAs (with 1 or more amino acids incorporated), which drop off the ribosome during protein synthesis, or as a result of ribosome stalling. In terms of biological role, catalyzes the release of premature peptidyl moieties from peptidyl-tRNA molecules trapped in stalled 50S ribosomal subunits, and thus maintains levels of free tRNAs and 50S ribosomes. The protein is Peptidyl-tRNA hydrolase of Streptococcus pneumoniae (strain JJA).